The following is a 199-amino-acid chain: FMN-dependent NADH:quinone oxidoreductase 2 (199 aa).

Residues serine 10, 17–19 (SDS), and 135–138 (TKGG) each bind FMN.

This sequence belongs to the azoreductase type 1 family. In terms of assembly, homodimer. FMN serves as cofactor.

The catalysed reaction is 2 a quinone + NADH + H(+) = 2 a 1,4-benzosemiquinone + NAD(+). It catalyses the reaction N,N-dimethyl-1,4-phenylenediamine + anthranilate + 2 NAD(+) = 2-(4-dimethylaminophenyl)diazenylbenzoate + 2 NADH + 2 H(+). In terms of biological role, quinone reductase that provides resistance to thiol-specific stress caused by electrophilic quinones. Its function is as follows. Also exhibits azoreductase activity. Catalyzes the reductive cleavage of the azo bond in aromatic azo compounds to the corresponding amines. This chain is FMN-dependent NADH:quinone oxidoreductase 2, found in Mesoplasma florum (strain ATCC 33453 / NBRC 100688 / NCTC 11704 / L1) (Acholeplasma florum).